The following is a 308-amino-acid chain: Protein translocase subunit SecF (308 aa).

6 helical membrane passes run 10 to 30 (LFFA…AIFG), 129 to 149 (LAVS…FRGV), 160 to 180 (IIAM…GGVL), 181 to 201 (FGWQ…GFSV), 241 to 261 (TQLM…GITL), and 264 to 284 (FAII…FIAA).

It belongs to the SecD/SecF family. SecF subfamily. In terms of assembly, forms a complex with SecD. Part of the essential Sec protein translocation apparatus which comprises SecA, SecYEG and auxiliary proteins SecDF. Other proteins may also be involved.

It localises to the cell membrane. Its function is as follows. Part of the Sec protein translocase complex. Interacts with the SecYEG preprotein conducting channel. SecDF uses the proton motive force (PMF) to complete protein translocation after the ATP-dependent function of SecA. This chain is Protein translocase subunit SecF, found in Anaerolinea thermophila (strain DSM 14523 / JCM 11388 / NBRC 100420 / UNI-1).